A 505-amino-acid chain; its full sequence is UDP-N-acetylmuramyl-tripeptide synthetase (505 aa).

A UDP-N-acetyl-alpha-D-muramoyl-L-alanyl-D-glutamate-binding site is contributed by Ser-35. 118 to 124 (GTDGKSS) provides a ligand contact to ATP. UDP-N-acetyl-alpha-D-muramoyl-L-alanyl-D-glutamate contacts are provided by residues 163 to 164 (ST), Thr-190, and Arg-200. Lys-232 bears the N6-carboxylysine mark.

This sequence belongs to the MurCDEF family. MurE subfamily. Post-translationally, carboxylation is probably crucial for Mg(2+) binding and, consequently, for the gamma-phosphate positioning of ATP.

Its subcellular location is the cytoplasm. It participates in cell wall biogenesis; peptidoglycan biosynthesis. Catalyzes the addition of an amino acid to the nucleotide precursor UDP-N-acetylmuramoyl-L-alanyl-D-glutamate (UMAG) in the biosynthesis of bacterial cell-wall peptidoglycan. In Borreliella afzelii (strain PKo) (Borrelia afzelii), this protein is UDP-N-acetylmuramyl-tripeptide synthetase.